Here is a 271-residue protein sequence, read N- to C-terminus: Tryptophan synthase alpha chain (271 aa).

Active-site proton acceptor residues include Glu56 and Asp67.

It belongs to the TrpA family. Tetramer of two alpha and two beta chains.

The enzyme catalyses (1S,2R)-1-C-(indol-3-yl)glycerol 3-phosphate + L-serine = D-glyceraldehyde 3-phosphate + L-tryptophan + H2O. Its pathway is amino-acid biosynthesis; L-tryptophan biosynthesis; L-tryptophan from chorismate: step 5/5. In terms of biological role, the alpha subunit is responsible for the aldol cleavage of indoleglycerol phosphate to indole and glyceraldehyde 3-phosphate. This is Tryptophan synthase alpha chain from Mycobacterium avium (strain 104).